The primary structure comprises 188 residues: Adenine phosphoribosyltransferase (188 aa).

This sequence belongs to the purine/pyrimidine phosphoribosyltransferase family. As to quaternary structure, homodimer.

The protein resides in the cytoplasm. It carries out the reaction AMP + diphosphate = 5-phospho-alpha-D-ribose 1-diphosphate + adenine. The protein operates within purine metabolism; AMP biosynthesis via salvage pathway; AMP from adenine: step 1/1. Functionally, catalyzes a salvage reaction resulting in the formation of AMP, that is energically less costly than de novo synthesis. The sequence is that of Adenine phosphoribosyltransferase from Burkholderia lata (strain ATCC 17760 / DSM 23089 / LMG 22485 / NCIMB 9086 / R18194 / 383).